Reading from the N-terminus, the 506-residue chain is MRFTTSIINEHRRFSSSSRSWVSPICFSEKKKKPSPPPESSISPVETNPKTKFISHESAVSLMKRERDPQGVLDIFNKASQQKGFNHNNATYSVLLDNLVRHKKFLAVDAILHQMKYETCRFQESLFLNLMRHFSRSDLHDKVMEMFNLIQVIARVKPSLNAISTCLNLLIDSGEVNLSRKLLLYAKHNLGLQPNTCIFNILVKHHCKNGDINFAFLVVEEMKRSGISYPNSITYSTLMDCLFAHSRSKEAVELFEDMISKEGISPDPVTFNVMINGFCRAGEVERAKKILDFMKKNGCNPNVYNYSALMNGFCKVGKIQEAKQTFDEVKKTGLKLDTVGYTTLMNCFCRNGETDEAMKLLGEMKASRCRADTLTYNVILRGLSSEGRSEEALQMLDQWGSEGVHLNKGSYRIILNALCCNGELEKAVKFLSVMSERGIWPHHATWNELVVRLCESGYTEIGVRVLIGFLRIGLIPGPKSWGAVVESICKERKLVHVFELLDSLVS.

A disordered region spans residues 28–48 (SEKKKKPSPPPESSISPVETN). PPR repeat units follow at residues 88-122 (NNAT…TCRF), 123-158 (QESL…RVKP), 159-194 (SLNA…GLQP), 195-229 (NTCI…GISY), 231-266 (NSIT…GISP), 267-301 (DPVT…GCNP), 302-336 (NVYN…GLKL), 337-371 (DTVG…RCRA), 372-406 (DTLT…GVHL), 407-441 (NKGS…GIWP), 442-476 (HHAT…GLIP), and 477-506 (GPKS…SLVS).

It belongs to the PPR family. P subfamily.

This chain is Pentatricopeptide repeat-containing protein At5g18475, found in Arabidopsis thaliana (Mouse-ear cress).